Consider the following 3432-residue polypeptide: Genome polyprotein (3432 aa).

An interaction with host EXOC1 region spans residues 2 to 15 (TKKPGGPGKNRAIN). The Cytoplasmic segment spans residues 2-109 (TKKPGGPGKN…RKQNKRGGNE (108 aa)). The hydrophobic; homodimerization of capsid protein C stretch occupies residues 37–72 (LLDGRGPVRFVLALITFFKFTALAPTKALLGRWKAV). The propeptide at 106–127 (GGNEGSIMWLASLAVVIACAGA) is ER anchor for the capsid protein C, removed in mature form by serine protease NS3. Residues 110–130 (GSIMWLASLAVVIACAGAMKL) traverse the membrane as a helical segment. Residues 131 to 253 (SNFQGKLLMT…ATRYLMKTEN (123 aa)) are Extracellular-facing. A glycan (N-linked (GlcNAc...) asparagine; by host) is linked at Asn-142. A helical membrane pass occupies residues 254–274 (WIIRNPGYAFLAAVLGWMLGS). Residues 275–279 (NNGQR) lie on the Cytoplasmic side of the membrane. Residues 280–294 (VVFTILLLLVAPAYS) traverse the membrane as a helical segment. Residues 295-746 (FNCLGMGNRD…QVFGGAFRTL (452 aa)) are Extracellular-facing. Disulfide bonds link Cys-297/Cys-324, Cys-354/Cys-410, Cys-354/Cys-415, Cys-368/Cys-399, Cys-386/Cys-410, and Cys-386/Cys-415. Residues 392 to 405 (DRGWGNGCGLFGKG) are fusion peptide. N-linked (GlcNAc...) asparagine; by host glycosylation occurs at Asn-448. Cystine bridges form between Cys-484-Cys-581 and Cys-598-Cys-629. Residues 747–767 (FGGMSWITQGLMGALLLWMGV) form a helical membrane-spanning segment. Topologically, residues 768-773 (NARDRS) are cytoplasmic. A helical membrane pass occupies residues 774–794 (IALAFLATGGVLVFLATNVHA). Residues 795–1219 (DTGCAIDITR…AFAEANSGGD (425 aa)) are Extracellular-facing. Disulfide bonds link Cys-798/Cys-809, Cys-849/Cys-937, Cys-973/Cys-1017, Cys-1074/Cys-1123, Cys-1085/Cys-1106, and Cys-1107/Cys-1110. Residues Asn-924 and Asn-1001 are each glycosylated (N-linked (GlcNAc...) asparagine; by host). A helical transmembrane segment spans residues 1220-1240 (VLHLALIAVFKIQPAFLVMNM). Residues 1241–1250 (LSTRWTNQEN) lie on the Cytoplasmic side of the membrane. The helical transmembrane segment at 1251–1271 (VILVLGAAFFQLASVDLQIGV) threads the bilayer. A topological domain (lumenal) is located at residue His-1272. The helical transmembrane segment at 1273–1293 (GILNAAAIAWMIVRAITFPTT) threads the bilayer. Residues 1294–1309 (SSVTMPVLALLTPGMR) lie on the Cytoplasmic side of the membrane. The helical transmembrane segment at 1310-1330 (ALYLDTYRIILLVIGICSLLH) threads the bilayer. Residues 1331-1341 (ERKKTMAKKKG) lie on the Lumenal side of the membrane. Residues 1342–1362 (AVLLGLALTSTGWFSPTTIAA) traverse the membrane as a helical segment. The Cytoplasmic segment spans residues 1363–1374 (GLMVCNPNKKRG). 2 interaction with human SPCS1 regions span residues 1374–1423 (GWPA…GKAT) and 1458–1505 (FHLI…TKRG). The helical transmembrane segment at 1375-1395 (WPATEFLSAVGLMFAIVGGLA) threads the bilayer. Over 1396 to 1398 (ELD) the chain is Lumenal. The helical transmembrane segment at 1399–1419 (IESMSIPFMLAGLMAVSYVVS) threads the bilayer. The Cytoplasmic portion of the chain corresponds to 1420–1476 (GKATDMWLERAADISWEMDAAITGSSRRLDVKLDDDGDFHLIDDPGVPWKVWVLRMS). The segment at 1427-1466 (LERAADISWEMDAAITGSSRRLDVKLDDDGDFHLIDDPGV) is interacts with and activates NS3 protease. Residues 1477 to 1497 (CIGLAALTPWAIVPAAFGYWL) constitute an intramembrane region (helical). Over 1498–2173 (TLKTTKRGGV…RMALEELPDA (676 aa)) the chain is Cytoplasmic. The Peptidase S7 domain occupies 1505 to 1682 (GGVFWDTPSP…DRQEEPVPEA (178 aa)). Catalysis depends on charge relay system; for serine protease NS3 activity residues His-1555, Asp-1579, and Ser-1639. Residues 1685-1841 (PNMLRKRQMT…DSNAPIHDLQ (157 aa)) enclose the Helicase ATP-binding domain. Positions 1689-1692 (RKRQ) are important for RNA-binding. Residue 1698–1705 (LHPGSGKT) coordinates ATP. The DEAH box signature appears at 1789–1792 (DEAH). One can recognise a Helicase C-terminal domain in the interval 1852 to 2017 (GYEWITEYAG…GLVAQLYGPE (166 aa)). The residue at position 1893 (Lys-1893) is an N6-acetyllysine; by host. The interval 1950-1972 (NPSPITSASAAQRRGRVGRNPNQ) is disordered. The regulates the ATPase activity of NS3 helicase stretch occupies residues 2168–2172 (EELPD). The chain crosses the membrane as a helical span at residues 2174 to 2194 (LETITLIVAITVMTGGFFLLM). The Lumenal portion of the chain corresponds to 2195–2199 (MQRKG). The helical intramembrane region spans 2200–2220 (IGKMGLGALVLTLATFFLWAA). Glu-2221 is a topological domain (lumenal). The helical transmembrane segment at 2222-2242 (VPGTKIAGTLLIALLLMVVLI) threads the bilayer. The Cytoplasmic portion of the chain corresponds to 2243 to 2257 (PEPEKQRSQTDNQLA). Residues 2258-2278 (VFLICVLTVVGVVAANEYGML) traverse the membrane as a helical segment. The Lumenal segment spans residues 2279-2311 (EKTKADLKSMFGGKTQASGLTGLPSMALDLRPA). Residues 2312–2332 (TAWALYGGSTVVLTPLLKHLI) constitute an intramembrane region (helical). Topologically, residues 2333-2368 (TSEYVTTSLASINSQAGSLFVLPRGVPFTDLDLTVG) are lumenal. A helical transmembrane segment spans residues 2369-2389 (LVFLGCWGQITLTTFLTAMVL). The Cytoplasmic portion of the chain corresponds to 2390–2444 (ATLHYGYMLPGWQAEALRAAQRRTAAGIMKNAVVDGMVATDVPELERTTPLMQKK). The chain crosses the membrane as a helical span at residues 2445–2465 (VGQVLLIGVSVAAFLVNPNVT). Residues 2466–2469 (TVRE) are Lumenal-facing. Residues 2470–2490 (AGVLVTAATLTLWDNGASAVW) traverse the membrane as a helical segment. At 2491 to 3432 (NSTTATGLCH…DVLIQEDRVI (942 aa)) the chain is on the cytoplasmic side. The region spanning 2528 to 2793 (GRPGGRTLGE…DVNLGSGTRA (266 aa)) is the mRNA cap 0-1 NS5-type MT domain. Ser-2583 lines the S-adenosyl-L-methionine pocket. Ser-2583 bears the Phosphoserine mark. Lys-2588 acts as the For 2'-O-MTase activity in catalysis. Residues Gly-2613, Trp-2614, Thr-2631, Lys-2632, Asp-2658, and Val-2659 each coordinate S-adenosyl-L-methionine. Asp-2673 (for 2'-O-MTase activity) is an active-site residue. Ile-2674 contributes to the S-adenosyl-L-methionine binding site. Residues Lys-2709 and Glu-2745 each act as for 2'-O-MTase activity in the active site. Tyr-2747 is a binding site for S-adenosyl-L-methionine. 4 residues coordinate Zn(2+): Glu-2967, His-2971, Cys-2976, and Cys-2979. Positions 3057–3209 (GKMYADDTAG…KPLDDRFATA (153 aa)) constitute a RdRp catalytic domain. Residues His-3244, Cys-3260, and Cys-3379 each coordinate Zn(2+).

In the N-terminal section; belongs to the class I-like SAM-binding methyltransferase superfamily. mRNA cap 0-1 NS5-type methyltransferase family. Homodimer. Interacts (via N-terminus) with host EXOC1 (via C-terminus); this interaction results in EXOC1 degradation through the proteasome degradation pathway. As to quaternary structure, forms heterodimers with envelope protein E in the endoplasmic reticulum and Golgi. In terms of assembly, homodimer; in the endoplasmic reticulum and Golgi. Interacts with protein prM. Interacts with non-structural protein 1. Interacts with host HSPA5. Homodimer; Homohexamer when secreted. Interacts with envelope protein E. NS1 interacts with NS4B. Interacts with host complement protein CFH; this interaction leads to the degradation of C3. As to quaternary structure, interacts (via N-terminus) with serine protease NS3. In terms of assembly, forms a heterodimer with serine protease NS3. May form homooligomers. Interacts with human SPCS1. Forms a heterodimer with NS2B. Interacts with non-structural protein 2A (via N-terminus). Interacts with NS4B. Interacts with unphosphorylated RNA-directed RNA polymerase NS5; this interaction stimulates RNA-directed RNA polymerase NS5 guanylyltransferase activity. Interacts with host ILF2. As to quaternary structure, interacts with serine protease NS3. In terms of assembly, homodimer. Interacts with host STAT2; this interaction inhibits the phosphorylation of the latter, and, when all viral proteins are present (polyprotein), targets STAT2 for degradation. Interacts with serine protease NS3. Mn(2+) serves as cofactor. Requires Mg(2+) as cofactor. Specific enzymatic cleavages in vivo yield mature proteins. Cleavages in the lumen of endoplasmic reticulum are performed by host signal peptidase, whereas cleavages in the cytoplasmic side are performed by serine protease NS3. Signal cleavage at the 2K-4B site requires a prior NS3 protease-mediated cleavage at the 4A-2K site. Post-translationally, cleaved in post-Golgi vesicles by a host furin, releasing the mature small envelope protein M, and peptide pr. This cleavage is incomplete as up to 30% of viral particles still carry uncleaved prM. In terms of processing, N-glycosylated. N-glycosylated. The excreted form is glycosylated and this is required for efficient secretion of the protein from infected cells. Post-translationally, acetylated by host KAT5. Acetylation modulates NS3 RNA-binding and unwinding activities and plays an important positive role for viral replication. In terms of processing, phosphorylated on serines residues. This phosphorylation may trigger NS5 nuclear localization.

It localises to the host endoplasmic reticulum membrane. It is found in the virion. The protein resides in the host nucleus. The protein localises to the host cytoplasm. Its subcellular location is the host perinuclear region. It localises to the secreted. It is found in the virion membrane. The protein resides in the host cell surface. The enzyme catalyses Selective hydrolysis of -Xaa-Xaa-|-Yaa- bonds in which each of the Xaa can be either Arg or Lys and Yaa can be either Ser or Ala.. It catalyses the reaction RNA(n) + a ribonucleoside 5'-triphosphate = RNA(n+1) + diphosphate. The catalysed reaction is a ribonucleoside 5'-triphosphate + H2O = a ribonucleoside 5'-diphosphate + phosphate + H(+). It carries out the reaction ATP + H2O = ADP + phosphate + H(+). The enzyme catalyses a 5'-end (5'-triphosphoguanosine)-ribonucleoside in mRNA + S-adenosyl-L-methionine = a 5'-end (N(7)-methyl 5'-triphosphoguanosine)-ribonucleoside in mRNA + S-adenosyl-L-homocysteine. It catalyses the reaction a 5'-end (N(7)-methyl 5'-triphosphoguanosine)-ribonucleoside in mRNA + S-adenosyl-L-methionine = a 5'-end (N(7)-methyl 5'-triphosphoguanosine)-(2'-O-methyl-ribonucleoside) in mRNA + S-adenosyl-L-homocysteine + H(+). In terms of biological role, plays a role in virus budding by binding to the cell membrane and gathering the viral RNA into a nucleocapsid that forms the core of a mature virus particle. During virus entry, may induce genome penetration into the host cytoplasm after hemifusion induced by the surface proteins. Can migrate to the cell nucleus where it modulates host functions. Overcomes the anti-viral effects of host EXOC1 by sequestering and degrading the latter through the proteasome degradation pathway. Inhibits RNA silencing by interfering with host Dicer. Its function is as follows. Prevents premature fusion activity of envelope proteins in trans-Golgi by binding to envelope protein E at pH 6.0. After virion release in extracellular space, gets dissociated from E dimers. Functionally, acts as a chaperone for envelope protein E during intracellular virion assembly by masking and inactivating envelope protein E fusion peptide. prM is the only viral peptide matured by host furin in the trans-Golgi network probably to avoid catastrophic activation of the viral fusion activity in acidic Golgi compartment prior to virion release. prM-E cleavage is inefficient, and many virions are only partially matured. These uncleaved prM would play a role in immune evasion. In terms of biological role, may play a role in virus budding. Exerts cytotoxic effects by activating a mitochondrial apoptotic pathway through M ectodomain. May display a viroporin activity. Binds to host cell surface receptor and mediates fusion between viral and cellular membranes. Efficient virus attachment to cell is, at least in part, mediated by host HSPA5. Envelope protein is synthesized in the endoplasmic reticulum in the form of heterodimer with protein prM. They play a role in virion budding in the ER, and the newly formed immature particle is covered with 60 spikes composed of heterodimer between precursor prM and envelope protein E. The virion is transported to the Golgi apparatus where the low pH causes dissociation of PrM-E heterodimers and formation of E homodimers. prM-E cleavage is inefficient, and many virions are only partially matured. These uncleaved prM would play a role in immune evasion. Its function is as follows. Involved in immune evasion, pathogenesis and viral replication. Once cleaved off the polyprotein, is targeted to three destinations: the viral replication cycle, the plasma membrane and the extracellular compartment. Essential for viral replication. Required for formation of the replication complex and recruitment of other non-structural proteins to the ER-derived membrane structures. Excreted as a hexameric lipoparticle that plays a role against host immune response. Antagonizing the complement function. Binds to the host macrophages and dendritic cells. Inhibits signal transduction originating from Toll-like receptor 3 (TLR3). Functionally, component of the viral RNA replication complex that functions in virion assembly and antagonizes the host alpha/beta interferon antiviral response. In terms of biological role, required cofactor for the serine protease function of NS3. May have membrane-destabilizing activity and form viroporins. Displays three enzymatic activities: serine protease, NTPase and RNA helicase. NS3 serine protease, in association with NS2B, performs its autocleavage and cleaves the polyprotein at dibasic sites in the cytoplasm: C-prM, NS2A-NS2B, NS2B-NS3, NS3-NS4A, NS4A-2K and NS4B-NS5. NS3 RNA helicase binds RNA and unwinds dsRNA in the 3' to 5' direction. Its function is as follows. Regulates the ATPase activity of the NS3 helicase activity. NS4A allows NS3 helicase to conserve energy during unwinding. Functionally, functions as a signal peptide for NS4B and is required for the interferon antagonism activity of the latter. In terms of biological role, induces the formation of ER-derived membrane vesicles where the viral replication takes place. Inhibits interferon (IFN)-induced host STAT1 phosphorylation and nuclear translocation, thereby preventing the establishment of cellular antiviral state by blocking the IFN-alpha/beta pathway. Inhibits STAT2 translocation in the nucleus after IFN-alpha treatment. Replicates the viral (+) and (-) RNA genome. Performs the capping of genomes in the cytoplasm. NS5 methylates viral RNA cap at guanine N-7 and ribose 2'-O positions. Besides its role in RNA genome replication, also prevents the establishment of cellular antiviral state by blocking the interferon-alpha/beta (IFN-alpha/beta) signaling pathway. Inhibits host TYK2 and STAT2 phosphorylation, thereby preventing activation of JAK-STAT signaling pathway. This is Genome polyprotein from Japanese encephalitis virus (strain SA-14) (JEV).